Consider the following 248-residue polypeptide: Large ribosomal subunit protein uL4 (248 aa).

Disordered stretches follow at residues 48–95 (GTHK…GPVP) and 210–248 (AFSE…RTGA). A compositionally biased stretch (basic and acidic residues) spans 233-248 (DATKARSSRHDDRTGA).

It belongs to the universal ribosomal protein uL4 family. In terms of assembly, part of the 50S ribosomal subunit.

One of the primary rRNA binding proteins, this protein initially binds near the 5'-end of the 23S rRNA. It is important during the early stages of 50S assembly. It makes multiple contacts with different domains of the 23S rRNA in the assembled 50S subunit and ribosome. In terms of biological role, forms part of the polypeptide exit tunnel. The sequence is that of Large ribosomal subunit protein uL4 from Tropheryma whipplei (strain TW08/27) (Whipple's bacillus).